Reading from the N-terminus, the 149-residue chain is Ribonuclease H (149 aa).

The region spanning 5–146 (QRPHVVIFTD…ADELAREGLA (142 aa)) is the RNase H type-1 domain. Residues Asp-14, Glu-52, Asp-74, and Asp-138 each contribute to the Mg(2+) site.

The protein belongs to the RNase H family. As to quaternary structure, monomer. Mg(2+) serves as cofactor.

It localises to the cytoplasm. The enzyme catalyses Endonucleolytic cleavage to 5'-phosphomonoester.. In terms of biological role, endonuclease that specifically degrades the RNA of RNA-DNA hybrids. This is Ribonuclease H from Afipia carboxidovorans (strain ATCC 49405 / DSM 1227 / KCTC 32145 / OM5) (Oligotropha carboxidovorans).